Consider the following 273-residue polypeptide: Large ribosomal subunit protein uL2 (273 aa).

2 disordered regions span residues 28 to 53 (KPFA…TTRH) and 221 to 273 (RGTA…RRSK). Positions 39-48 (KSGGRNNNGR) are enriched in low complexity.

The protein belongs to the universal ribosomal protein uL2 family. Part of the 50S ribosomal subunit. Forms a bridge to the 30S subunit in the 70S ribosome.

Its function is as follows. One of the primary rRNA binding proteins. Required for association of the 30S and 50S subunits to form the 70S ribosome, for tRNA binding and peptide bond formation. It has been suggested to have peptidyltransferase activity; this is somewhat controversial. Makes several contacts with the 16S rRNA in the 70S ribosome. The polypeptide is Large ribosomal subunit protein uL2 (Salmonella agona (strain SL483)).